Reading from the N-terminus, the 364-residue chain is Ribosomal RNA large subunit methyltransferase F (364 aa).

Residues 1–30 are disordered; it reads MTNKRKSAKPLEPAKRAPKPRTKKSRDLSA.

It belongs to the methyltransferase superfamily. METTL16/RlmF family.

It localises to the cytoplasm. The catalysed reaction is adenosine(1618) in 23S rRNA + S-adenosyl-L-methionine = N(6)-methyladenosine(1618) in 23S rRNA + S-adenosyl-L-homocysteine + H(+). In terms of biological role, specifically methylates the adenine in position 1618 of 23S rRNA. The polypeptide is Ribosomal RNA large subunit methyltransferase F (Vibrio vulnificus (strain CMCP6)).